The chain runs to 725 residues: Heme/hemopexin utilization protein C (725 aa).

Positions 1–21 (MRFSKLSLAIATTLVTANALA) are cleaved as a signal peptide. Positions 36-147 (DPSRFAYTPE…LGGVVAMRTP (112 aa)) constitute a TBDR plug domain. Positions 158–725 (KFGVKIRQGY…NAKISAVYSF (568 aa)) constitute a TBDR beta-barrel domain. A TonB C-terminal box motif is present at residues 708–725 (SLMEGTGRNAKISAVYSF).

This sequence belongs to the TonB-dependent receptor family.

It localises to the cell outer membrane. Required for utilization of free heme at low concentrations. The polypeptide is Heme/hemopexin utilization protein C (hxuC) (Haemophilus influenzae).